Reading from the N-terminus, the 542-residue chain is Multidrug transporter DTR1 (542 aa).

Asparagine 6 and asparagine 46 each carry an N-linked (GlcNAc...) asparagine glycan. The chain crosses the membrane as a helical span at residues 80 to 100; the sequence is LIFLIVIYNGFLGPLAGNVFI. N-linked (GlcNAc...) asparagine glycans are attached at residues asparagine 111 and asparagine 118. The next 5 membrane-spanning stretches (helical) occupy residues 119-139, 146-166, 169-189, 210-230, and 237-257; these read ATVSVFMATFSISPLFWGALA, ILYIISISLMVIINILLASVP, IGSLIFLRIIQAFASSSVISL, FMLGPNLGPILAPIIAGLILL, and WLFGFLCIVSGLGLIMVILLL. An N-linked (GlcNAc...) asparagine glycan is attached at asparagine 274. Helical transmembrane passes span 332 to 352, 374 to 394, 419 to 439, and 441 to 461; these read IMTFPPVILTSIANALLFCTY, IGACYVCPGVCMLLGSQIGGH, ILTVCGVLLAIGGSIGYGWCI, and FHYHISAVLVFAGLMAFGLTW. Asparagine 463 carries an N-linked (GlcNAc...) asparagine glycan. A run of 2 helical transmembrane segments spans residues 481 to 501 and 511 to 531; these read AIAVSSFFRNIAAAISSALIA and FCFLGLGLINLVSLFSILVLI.

Belongs to the major facilitator superfamily. CAR1 family.

It is found in the cell membrane. Functionally, plasma membrane acetic acid exporter, relieving the stress induced upon cells within hemocytes, and thus enabling increased proliferation and virulence against Galleria mellonella larvae. Confers resistance to weak acid and oxidative stress, but not to antifungal drugs. This chain is Multidrug transporter DTR1, found in Candida glabrata (strain ATCC 2001 / BCRC 20586 / JCM 3761 / NBRC 0622 / NRRL Y-65 / CBS 138) (Yeast).